The sequence spans 158 residues: Protein Smg homolog (158 aa).

The protein belongs to the Smg family.

This Thioalkalivibrio sulfidiphilus (strain HL-EbGR7) protein is Protein Smg homolog.